A 103-amino-acid polypeptide reads, in one-letter code: Large ribosomal subunit protein uL24 (103 aa).

Belongs to the universal ribosomal protein uL24 family. As to quaternary structure, part of the 50S ribosomal subunit.

One of two assembly initiator proteins, it binds directly to the 5'-end of the 23S rRNA, where it nucleates assembly of the 50S subunit. Its function is as follows. One of the proteins that surrounds the polypeptide exit tunnel on the outside of the subunit. The sequence is that of Large ribosomal subunit protein uL24 from Latilactobacillus sakei subsp. sakei (strain 23K) (Lactobacillus sakei subsp. sakei).